The primary structure comprises 244 residues: MRRMAKYDRSYSMQDAHGPNGLARRGTQRGCSRSKSTRRGNLGTIASLTFSQKQALNLSWRLLKPQASACFRKIFLELEIASPKVKQIFYKAALVDAFNKDDDNTATLEVHIKLTTKFFDELLATLDDENEFVAKIRGIGSAHAILAKGSNFSSDIWERLGEIAMERVCSHEVVTKTREASRAWRTLIAILIDELRGGFEGELRQHRKSSSTDQIEMGKVEDEEELHSKLQQLRMDYNQTLPYT.

The tract at residues 1–38 (MRRMAKYDRSYSMQDAHGPNGLARRGTQRGCSRSKSTR) is disordered. Residues 47 to 200 (SLTFSQKQAL…LIDELRGGFE (154 aa)) enclose the Globin domain. Heme is bound by residues H111 and H143.

It belongs to the globin family.

This is Globin-like protein 9 from Caenorhabditis briggsae.